Here is a 488-residue protein sequence, read N- to C-terminus: Fumarate hydratase (488 aa).

Residues Ser105, Ser147, Asn148, Thr194, and His195 each coordinate (S)-malate. The active-site Proton donor/acceptor is His195. The active site involves Ser340. (S)-malate-binding residues include Ser341, Lys346, and Asn348.

The protein belongs to the class-II fumarase/aspartase family. Fumarase subfamily. Homotetramer.

Its subcellular location is the cytoplasm. It localises to the cytosol. The enzyme catalyses (S)-malate = fumarate + H2O. Functionally, catalyzes the reversible stereospecific interconversion of fumarate to L-malate. Fumarate metabolism in the cytosol plays a role during urea cycle and arginine metabolism; fumarate being a by-product of the urea cycle and amino-acid catabolism. The protein is Fumarate hydratase of Schistosoma mansoni (Blood fluke).